Here is a 446-residue protein sequence, read N- to C-terminus: Phosphoglucosamine mutase (446 aa).

Serine 100 serves as the catalytic Phosphoserine intermediate. Mg(2+) is bound by residues serine 100, aspartate 239, aspartate 241, and aspartate 243. Serine 100 bears the Phosphoserine mark.

It belongs to the phosphohexose mutase family. It depends on Mg(2+) as a cofactor. Activated by phosphorylation.

It carries out the reaction alpha-D-glucosamine 1-phosphate = D-glucosamine 6-phosphate. In terms of biological role, catalyzes the conversion of glucosamine-6-phosphate to glucosamine-1-phosphate. The sequence is that of Phosphoglucosamine mutase from Shouchella clausii (strain KSM-K16) (Alkalihalobacillus clausii).